The primary structure comprises 566 residues: Sulfite reductase [NADPH] hemoprotein beta-component (566 aa).

[4Fe-4S] cluster-binding residues include cysteine 430, cysteine 436, cysteine 475, and cysteine 479. Residue cysteine 479 participates in siroheme binding.

It belongs to the nitrite and sulfite reductase 4Fe-4S domain family. In terms of assembly, alpha(8)-beta(8). The alpha component is a flavoprotein, the beta component is a hemoprotein. Requires siroheme as cofactor. It depends on [4Fe-4S] cluster as a cofactor.

The catalysed reaction is hydrogen sulfide + 3 NADP(+) + 3 H2O = sulfite + 3 NADPH + 4 H(+). The protein operates within sulfur metabolism; hydrogen sulfide biosynthesis; hydrogen sulfide from sulfite (NADPH route): step 1/1. Its function is as follows. Component of the sulfite reductase complex that catalyzes the 6-electron reduction of sulfite to sulfide. This is one of several activities required for the biosynthesis of L-cysteine from sulfate. The polypeptide is Sulfite reductase [NADPH] hemoprotein beta-component (Baumannia cicadellinicola subsp. Homalodisca coagulata).